The chain runs to 419 residues: L-rhamnose isomerase (419 aa).

Positions 262, 294, and 296 each coordinate Mn(2+).

Belongs to the rhamnose isomerase family. In terms of assembly, homotetramer. Mn(2+) is required as a cofactor.

Its subcellular location is the cytoplasm. It carries out the reaction L-rhamnopyranose = L-rhamnulose. The protein operates within carbohydrate degradation; L-rhamnose degradation; glycerone phosphate from L-rhamnose: step 1/3. In terms of biological role, catalyzes the interconversion of L-rhamnose and L-rhamnulose. This chain is L-rhamnose isomerase, found in Escherichia coli O9:H4 (strain HS).